Reading from the N-terminus, the 163-residue chain is Phosphopantetheine adenylyltransferase (163 aa).

S10 is a binding site for substrate. ATP contacts are provided by residues 10 to 11 (SF) and H18. Substrate is bound by residues K42, L74, and R88. Residues 89–91 (GLR), E99, and 124–130 (YSFLSSS) contribute to the ATP site.

The protein belongs to the bacterial CoaD family. In terms of assembly, homohexamer. The cofactor is Mg(2+).

It localises to the cytoplasm. The enzyme catalyses (R)-4'-phosphopantetheine + ATP + H(+) = 3'-dephospho-CoA + diphosphate. The protein operates within cofactor biosynthesis; coenzyme A biosynthesis; CoA from (R)-pantothenate: step 4/5. Its function is as follows. Reversibly transfers an adenylyl group from ATP to 4'-phosphopantetheine, yielding dephospho-CoA (dPCoA) and pyrophosphate. This Bacillus mycoides (strain KBAB4) (Bacillus weihenstephanensis) protein is Phosphopantetheine adenylyltransferase.